A 230-amino-acid polypeptide reads, in one-letter code: V-type proton ATPase subunit E (230 aa).

The protein belongs to the V-ATPase E subunit family. As to quaternary structure, V-ATPase is a heteromultimeric enzyme composed of a peripheral catalytic V1 complex (components A to H) attached to an integral membrane V0 proton pore complex (components: a, c, c', c'', d, e, f and VOA1).

It is found in the vacuole membrane. Its function is as follows. Subunit of the V1 complex of vacuolar(H+)-ATPase (V-ATPase), a multisubunit enzyme composed of a peripheral complex (V1) that hydrolyzes ATP and a membrane integral complex (V0) that translocates protons. V-ATPase is responsible for acidifying and maintaining the pH of intracellular compartments. The protein is V-type proton ATPase subunit E of Neurospora crassa (strain ATCC 24698 / 74-OR23-1A / CBS 708.71 / DSM 1257 / FGSC 987).